The sequence spans 199 residues: Recombination protein RecR (199 aa).

The segment at 57-72 (CQSCRTFTEETYCPIC) adopts a C4-type zinc-finger fold. The Toprim domain occupies 81-176 (SVICVVETPA…AVSRIAHGVP (96 aa)).

The protein belongs to the RecR family.

In terms of biological role, may play a role in DNA repair. It seems to be involved in an RecBC-independent recombinational process of DNA repair. It may act with RecF and RecO. The polypeptide is Recombination protein RecR (Shewanella piezotolerans (strain WP3 / JCM 13877)).